The following is a 484-amino-acid chain: Pyruvate kinase (484 aa).

Substrate is bound at residue arginine 33. Positions 35, 37, 67, and 68 each coordinate K(+). ATP is bound at residue 35-38 (NFSH). ATP is bound by residues arginine 74 and lysine 155. Glutamate 221 is a Mg(2+) binding site. Substrate contacts are provided by glycine 244, aspartate 245, and threonine 277. Aspartate 245 lines the Mg(2+) pocket.

It belongs to the pyruvate kinase family. Homotetramer. Mg(2+) serves as cofactor. It depends on K(+) as a cofactor.

It carries out the reaction pyruvate + ATP = phosphoenolpyruvate + ADP + H(+). Its pathway is carbohydrate degradation; glycolysis; pyruvate from D-glyceraldehyde 3-phosphate: step 5/5. The chain is Pyruvate kinase (pyk) from Chlamydia pneumoniae (Chlamydophila pneumoniae).